The sequence spans 156 residues: Zinc metalloproteinase-disintegrin jararin (156 aa).

The Peptidase M12B domain occupies 1–67 (FVANRMAHEL…NYYGCLLNEP (67 aa)). His8 lines the Zn(2+) pocket. Glu9 is a catalytic residue. His12 contributes to the Zn(2+) binding site. Cystine bridges form between Cys23–Cys47, Cys25–Cys30, Cys78–Cys97, Cys89–Cys107, Cys91–Cys102, Cys101–Cys124, Cys115–Cys121, Cys120–Cys145, and Cys133–Cys152. One can recognise a Disintegrin domain in the interval 75-156 (PPFCGNYYPE…GQSGDCPRNS (82 aa)). Over residues 136–145 (GRGDNPDDRC) the composition is skewed to basic and acidic residues. Residues 136-156 (GRGDNPDDRCTGQSGDCPRNS) are disordered. Positions 137–139 (RGD) match the Cell attachment site motif. Residues 146-156 (TGQSGDCPRNS) show a composition bias toward polar residues.

The protein belongs to the venom metalloproteinase (M12B) family. P-II subfamily. P-IIb sub-subfamily. In terms of assembly, monomer. The cofactor is Zn(2+). Expressed by the venom gland.

It is found in the secreted. Snake venom zinc metalloproteinase that inhibits ADP-induced platelet aggregation (probably by binding integrin alpha-IIb/beta-3 (ITGA2B/ITGB3)) and degrades fibrinogen. The polypeptide is Zinc metalloproteinase-disintegrin jararin (Bothrops jararaca (Jararaca)).